A 69-amino-acid chain; its full sequence is Probable rubredoxin HupI (69 aa).

The Rubredoxin-like domain maps to 16-67 (VTRLECGICWTVYDPADGDDVAQIAPGTPFAALPEEWHCPNCDAPKSKFMAI). Fe cation is bound by residues Cys21, Cys24, Cys54, and Cys57.

This sequence belongs to the rubredoxin family. Fe(3+) serves as cofactor.

Could be an electron transport intermediate in hydrogen oxidation. This Bradyrhizobium diazoefficiens (strain JCM 10833 / BCRC 13528 / IAM 13628 / NBRC 14792 / USDA 110) protein is Probable rubredoxin HupI (hupI).